Consider the following 478-residue polypeptide: Aspartate ammonia-lyase (478 aa).

Positions 104, 143, 144, 145, and 190 each coordinate L-aspartate. Positions 320-329 (GSSIMPAKVN) are SS loop. The Proton acceptor role is filled by Ser-321. L-aspartate is bound by residues Ser-322 and Lys-327.

The protein belongs to the class-II fumarase/aspartase family. Aspartase subfamily. In terms of assembly, homotetramer.

The enzyme catalyses L-aspartate = fumarate + NH4(+). In terms of biological role, catalyzes the reversible conversion of L-aspartate to fumarate and ammonia. This Escherichia coli O157:H7 protein is Aspartate ammonia-lyase (aspA).